The primary structure comprises 380 residues: Tryptophan 2,3-dioxygenase (380 aa).

Residues 57-61 (FIITH) and R128 each bind substrate. H313 is a binding site for heme. T328 serves as a coordination point for substrate.

It belongs to the tryptophan 2,3-dioxygenase family. Homotetramer. Dimer of dimers. Heme is required as a cofactor.

It carries out the reaction L-tryptophan + O2 = N-formyl-L-kynurenine. Its pathway is amino-acid degradation; L-tryptophan degradation via kynurenine pathway; L-kynurenine from L-tryptophan: step 1/2. It participates in pigment biosynthesis; ommochrome biosynthesis. Heme-dependent dioxygenase that catalyzes the oxidative cleavage of the L-tryptophan (L-Trp) pyrrole ring and converts L-tryptophan to N-formyl-L-kynurenine. Catalyzes the oxidative cleavage of the indole moiety. The chain is Tryptophan 2,3-dioxygenase from Drosophila ananassae (Fruit fly).